Here is a 327-residue protein sequence, read N- to C-terminus: Leucotoxin LukDv (327 aa).

The N-terminal stretch at 1–26 (MKMKKLVKSSVASSIALLLLSNTVDA) is a signal peptide.

It belongs to the aerolysin family. As to quaternary structure, toxicity requires sequential binding and synergistic association of a class S and a class F component which form heterooligomeric complexes. LukEv (class S) associates with LukDv (class F).

It is found in the secreted. In terms of biological role, part of a bi-component leucotoxin that acts by forming pores in the membrane of the target cells. The activity of LukEv-LukDv to rabbit leukocytes is similar to that of the Panton-Valentine leucocidin (PVL). LukEv-LukDv is hemolytic to rabbit red blood cells although the activity is only 8% of gamma-hemolysin. This is Leucotoxin LukDv (lukDv) from Staphylococcus aureus (strain NCTC 8325 / PS 47).